A 540-amino-acid chain; its full sequence is Phosphoenolpyruvate carboxykinase (ATP) (540 aa).

Arg65 contacts substrate. An N6-acetyllysine modification is found at Lys87. Residues Tyr207 and Lys213 each contribute to the substrate site. Residues Lys213, His232, and 248–256 (GLSGTGKTT) each bind ATP. Mn(2+)-binding residues include Lys213 and His232. A Mn(2+)-binding site is contributed by Asp269. ATP is bound by residues Glu297, Arg333, 449 to 450 (RI), and Thr455. Arg333 is a substrate binding site. Lys523 carries the N6-acetyllysine modification.

Belongs to the phosphoenolpyruvate carboxykinase (ATP) family. Monomer. The cofactor is Mn(2+).

The protein resides in the cytoplasm. It catalyses the reaction oxaloacetate + ATP = phosphoenolpyruvate + ADP + CO2. The protein operates within carbohydrate biosynthesis; gluconeogenesis. In terms of biological role, involved in the gluconeogenesis. Catalyzes the conversion of oxaloacetate (OAA) to phosphoenolpyruvate (PEP) through direct phosphoryl transfer between the nucleoside triphosphate and OAA. This chain is Phosphoenolpyruvate carboxykinase (ATP), found in Escherichia fergusonii (strain ATCC 35469 / DSM 13698 / CCUG 18766 / IAM 14443 / JCM 21226 / LMG 7866 / NBRC 102419 / NCTC 12128 / CDC 0568-73).